Reading from the N-terminus, the 29-residue chain is uncharacterized protein (29 aa).

It localises to the plastid. The protein localises to the chloroplast. This is an uncharacterized protein from Trieres chinensis (Marine centric diatom).